The sequence spans 507 residues: MKFATILSTTALALSSLVASKPIFLSKRDAGSSAAAAWRSESIYQLVTDRFARTDGSTSATCNTGDRVYCGGTFQGIIDKLDYIQGMGFTAIWISPVVEQIPDDTGYGYAYHGYWMKDIYAINSNFGTADDLKNLSNELHKRNMKLMVDIVTNHYAWNGAGSSVAYSNYNPFNQQSYFHDYCLITNYDDQTNVEDCWEGDNTVSLPDLRTEDSDVSSIFNLWVAELVSNYSIDGLRIDSAKHVDESFYPSFQSAAGVYLLGEVYDGDPAYTCPYQNYMSGVTNYPLYYPMLRFFQGTSNSVDELNAMISSLESDCKDITLLGNFIENHDQPRLPSYTSDSALIKNAIAFNLMSDGIPIIYYGQEQGYSGSSDPNNREALWLSGYSTSNGYYKLISSVNQIRNQAIYKDSKYTTYWSDVLYASGHVIALQRGADDQRIVSVFNNLGSSGSQTVTFSTKYSGGEKVVDVLTCQTSYANSDSTLTVSISGGAPRIYAPASLIANSGICNF.

The N-terminal stretch at 1–20 is a signal peptide; that stretch reads MKFATILSTTALALSSLVAS. Cysteines 62 and 70 form a disulfide. W115 lines the substrate pocket. Position 153 (N153) interacts with Ca(2+). H154 contributes to the substrate binding site. C182 and C196 are joined by a disulfide. E194 and D207 together coordinate Ca(2+). N229 carries N-linked (GlcNAc...) asparagine glycosylation. Position 236 (R236) interacts with substrate. Residues D238, H242, and E262 each contribute to the Ca(2+) site. The Nucleophile role is filled by D238. Residue 241–242 coordinates substrate; sequence KH. Catalysis depends on E262, which acts as the Proton donor. G266 lines the substrate pocket. A disulfide bond links C272 and C315. Substrate-binding residues include D329 and R376. Cysteines 470 and 505 form a disulfide.

It belongs to the glycosyl hydrolase 13 family. The cofactor is Ca(2+).

The enzyme catalyses Endohydrolysis of (1-&gt;4)-alpha-D-glucosidic linkages in polysaccharides containing three or more (1-&gt;4)-alpha-linked D-glucose units.. The chain is Alpha-amylase 2 (SWA2) from Schwanniomyces occidentalis (Yeast).